Consider the following 451-residue polypeptide: Sterol 14alpha-demethylase (451 aa).

Heme b is bound by residues Gln72, Tyr76, Lys97, Arg326, His392, and Cys394.

It belongs to the cytochrome P450 family. As to quaternary structure, homodimer. Heme b is required as a cofactor.

It is found in the cytoplasm. The catalysed reaction is a 14alpha-methyl steroid + 6 reduced [2Fe-2S]-[ferredoxin] + 3 O2 + 5 H(+) = a Delta(14) steroid + formate + 6 oxidized [2Fe-2S]-[ferredoxin] + 4 H2O. Its activity is regulated as follows. Inhibited by alpha-ethyl-N-4-pyridinyl-benzeneacetamide (EPBA) and 4,4'-dihydroxybenzophenone (DHBP). Its function is as follows. Sterol 14alpha-demethylase whose physiological substrate is not known. Accepts electrons from the iron-sulfur ferredoxin Fdx encoded by an adjacent gene. In vitro, catalyzes C14-demethylation of lanosterol, 24,25-dihydrolanosterol and obtusifoliol, to produce the 8,14-dienes stereoselectively. The chain is Sterol 14alpha-demethylase (cyp51) from Mycobacterium tuberculosis (strain ATCC 25618 / H37Rv).